The following is a 557-amino-acid chain: Dihydroxy-acid dehydratase (557 aa).

Cys50 is a binding site for [2Fe-2S] cluster. Position 82 (Asp82) interacts with Mg(2+). A [2Fe-2S] cluster-binding site is contributed by Cys123. Positions 124 and 125 each coordinate Mg(2+). Lys125 is modified (N6-carboxylysine). Cys195 contributes to the [2Fe-2S] cluster binding site. Glu447 serves as a coordination point for Mg(2+). Residue Ser473 is the Proton acceptor of the active site.

The protein belongs to the IlvD/Edd family. In terms of assembly, homodimer. [2Fe-2S] cluster is required as a cofactor. The cofactor is Mg(2+).

The catalysed reaction is (2R)-2,3-dihydroxy-3-methylbutanoate = 3-methyl-2-oxobutanoate + H2O. It carries out the reaction (2R,3R)-2,3-dihydroxy-3-methylpentanoate = (S)-3-methyl-2-oxopentanoate + H2O. The protein operates within amino-acid biosynthesis; L-isoleucine biosynthesis; L-isoleucine from 2-oxobutanoate: step 3/4. Its pathway is amino-acid biosynthesis; L-valine biosynthesis; L-valine from pyruvate: step 3/4. In terms of biological role, functions in the biosynthesis of branched-chain amino acids. Catalyzes the dehydration of (2R,3R)-2,3-dihydroxy-3-methylpentanoate (2,3-dihydroxy-3-methylvalerate) into 2-oxo-3-methylpentanoate (2-oxo-3-methylvalerate) and of (2R)-2,3-dihydroxy-3-methylbutanoate (2,3-dihydroxyisovalerate) into 2-oxo-3-methylbutanoate (2-oxoisovalerate), the penultimate precursor to L-isoleucine and L-valine, respectively. The sequence is that of Dihydroxy-acid dehydratase from Nitrosospira multiformis (strain ATCC 25196 / NCIMB 11849 / C 71).